The sequence spans 321 residues: MSKPIQMEKGVKYRDADKMALIPVKNMPTEQKEVLRKPEWMKIKLPASSKRIDDIKSAMRKNNLHSVCEEASCPNLAECFNHGTATFMILGAICTRRCPFCDVAHGRPVAPEAEEPKKLAKTIQDMKLKYVVITSVDRDDLRDGGAQHFADCNREIRALNPEIRIETLVPDFRGRMDRALEAMIDNPPDVFNHNLETAPRLYRKVRPGANYQWSLDLLKKFKEQHPNVPTKSGLMMGLGETKEEIVEVLKDLRAHGVTMLTLGQYLAPSRHHLPVERYVPPAEFDELKEIALELGFTHAACGPFVRSSYHADLQAKGEEVK.

Residues C68, C73, C79, C94, C98, C101, and S308 each contribute to the [4Fe-4S] cluster site. Residues 80–297 (FNHGTATFMI…KEIALELGFT (218 aa)) form the Radical SAM core domain.

The protein belongs to the radical SAM superfamily. Lipoyl synthase family. [4Fe-4S] cluster serves as cofactor.

The protein resides in the cytoplasm. The catalysed reaction is [[Fe-S] cluster scaffold protein carrying a second [4Fe-4S](2+) cluster] + N(6)-octanoyl-L-lysyl-[protein] + 2 oxidized [2Fe-2S]-[ferredoxin] + 2 S-adenosyl-L-methionine + 4 H(+) = [[Fe-S] cluster scaffold protein] + N(6)-[(R)-dihydrolipoyl]-L-lysyl-[protein] + 4 Fe(3+) + 2 hydrogen sulfide + 2 5'-deoxyadenosine + 2 L-methionine + 2 reduced [2Fe-2S]-[ferredoxin]. The protein operates within protein modification; protein lipoylation via endogenous pathway; protein N(6)-(lipoyl)lysine from octanoyl-[acyl-carrier-protein]: step 2/2. Functionally, catalyzes the radical-mediated insertion of two sulfur atoms into the C-6 and C-8 positions of the octanoyl moiety bound to the lipoyl domains of lipoate-dependent enzymes, thereby converting the octanoylated domains into lipoylated derivatives. The sequence is that of Lipoyl synthase from Aliivibrio fischeri (strain ATCC 700601 / ES114) (Vibrio fischeri).